The primary structure comprises 224 residues: Claudin-19 (224 aa).

Residues 1-7 are Cytoplasmic-facing; it reads MANSGLQ. Residues 8 to 28 form a helical membrane-spanning segment; it reads LLGYFLALGGWVGIIASTALP. Over 29 to 81 the chain is Extracellular; the sequence is QWKQSSYAGDAIITAVGLYEGLWMSCASQSTGQVQCKLYDSLLALDGHIQSAR. A disulfide bond links cysteine 54 and cysteine 64. Residues 82–102 traverse the membrane as a helical segment; it reads ALMVVAVLLGFVAMVLSVVGM. The Cytoplasmic portion of the chain corresponds to 103–117; it reads KCTRVGDSNPIAKGR. Residues 118–138 form a helical membrane-spanning segment; that stretch reads VAIAGGALFILAGLCTLTAVS. Over 139-160 the chain is Extracellular; that stretch reads WYATLVTQEFFNPSTPVNARYE. Residues 161-181 form a helical membrane-spanning segment; sequence FGPALFVGWASAGLAVLGGSF. At 182-224 the chain is on the cytoplasmic side; that stretch reads LCCTCPEPERPNSSPQPYRPGPSAAAREPVVKLPASAKGPLGV. Positions 191 to 224 are disordered; the sequence is RPNSSPQPYRPGPSAAAREPVVKLPASAKGPLGV.

Belongs to the claudin family. In terms of assembly, can form homo- and heteropolymeric tight junction strands. Interacts with other claudins including CLDN3, CLDN10, CLDN16 and CLDN18 with highest affinity for CLDN16. Interacts (via PDZ-binding motif TRV) with TJP1 (via PDZ domain).

It localises to the cell junction. Its subcellular location is the tight junction. The protein resides in the cell membrane. It catalyses the reaction Mg(2+)(in) = Mg(2+)(out). It carries out the reaction Ca(2+)(in) = Ca(2+)(out). The catalysed reaction is Na(+)(in) = Na(+)(out). The enzyme catalyses K(+)(in) = K(+)(out). It catalyses the reaction Rb(+)(in) = Rb(+)(out). It carries out the reaction Cs(+)(in) = Cs(+)(out). The catalysed reaction is Li(+)(in) = Li(+)(out). Forms paracellular channels: coassembles with CLDN16 into tight junction strands with cation-selective channels through the strands, conveying epithelial permeability in a process known as paracellular tight junction permeability. Involved in the maintenance of ion gradients along the nephron. In the thick ascending limb (TAL) of Henle's loop, facilitates sodium paracellular permeability from the interstitial compartment to the lumen, contributing to the lumen-positive transepithelial potential that drives paracellular magnesium and calcium reabsorption. Forms paracellular barriers on its own. In the peripheral nervous system, represents a major constituent of the tight junctions in Schwann cells and contributes to electrical sealing. During retinal neurogenesis, may regulate the barrier properties of tight junctions in retinal pigment epithelium, required for proper retinal tissue differentiation and vision. The protein is Claudin-19 of Homo sapiens (Human).